We begin with the raw amino-acid sequence, 129 residues long: Large ribosomal subunit protein bL32m (129 aa).

The N-terminal 63 residues, 1 to 63 (MAAMTAAAAA…LEDIWEGILR (63 aa)), are a transit peptide targeting the mitochondrion. 4 residues coordinate Zn(2+): C94, C97, C107, and C110.

The protein belongs to the bacterial ribosomal protein bL32 family. In terms of assembly, component of the mitochondrial large ribosomal subunit (mt-LSU). Mature N.crassa 74S mitochondrial ribosomes consist of a small (37S) and a large (54S) subunit. The 37S small subunit contains a 16S ribosomal RNA (16S mt-rRNA) and 32 different proteins. The 54S large subunit contains a 23S rRNA (23S mt-rRNA) and 42 different proteins. bL32m has a zinc binding site. In terms of processing, MRPL32 precursor is processed by the m-AAA protease (composed of YTA12/RCA1 and YTA10/AFG3), which cleaves the N-terminal transit peptide. Cleavage by the m-AAA protease takes place prior to assembly into the large subunit, an essential step for mitochondrial ribosome (mitoribosome) assembly. Proper processing by the m-AAA protease is dependent on the zinc-binding region within the tightly folded C-terminal domain of MRPL32: zinc-dependent folding halts degradation initiated from the N-terminus and triggers the release of mature MRPL32.

It localises to the mitochondrion. Its function is as follows. Component of the mitochondrial ribosome (mitoribosome), a dedicated translation machinery responsible for the synthesis of mitochondrial genome-encoded proteins, including at least some of the essential transmembrane subunits of the mitochondrial respiratory chain. The mitoribosomes are attached to the mitochondrial inner membrane and translation products are cotranslationally integrated into the membrane. In Neurospora crassa (strain ATCC 24698 / 74-OR23-1A / CBS 708.71 / DSM 1257 / FGSC 987), this protein is Large ribosomal subunit protein bL32m (mrpl32).